An 80-amino-acid chain; its full sequence is 14-3-3-like protein 1 (80 aa).

It belongs to the 14-3-3 family.

This is 14-3-3-like protein 1 from Pseudotsuga menziesii (Douglas-fir).